Here is a 436-residue protein sequence, read N- to C-terminus: Tubulin epsilon and delta complex protein 2 (436 aa).

Disordered stretches follow at residues 53-76 (ARTPSPVPETKEEDPSPACAPSSQ) and 94-191 (VRKG…PSSA). Low complexity predominate over residues 111 to 131 (TSKAATSGAAAASHPRAPSRG). Basic and acidic residues predominate over residues 153–170 (DYPEHRLRSKGDKTHVRT). S161 is modified (phosphoserine).

As to quaternary structure, interacts with TEDC1. Found in a complex with TEDC1, TEDC2, TUBE1 and TUBD1.

The protein localises to the cell projection. It localises to the cilium. The protein resides in the cytoplasm. It is found in the cytoskeleton. Its subcellular location is the microtubule organizing center. The protein localises to the centrosome. It localises to the centriole. In terms of biological role, acts as a positive regulator of ciliary hedgehog signaling. Required for centriole stability. The protein is Tubulin epsilon and delta complex protein 2 of Mus musculus (Mouse).